We begin with the raw amino-acid sequence, 91 residues long: Small ribosomal subunit protein bS20 (91 aa).

It belongs to the bacterial ribosomal protein bS20 family.

Binds directly to 16S ribosomal RNA. This is Small ribosomal subunit protein bS20 from Caulobacter vibrioides (strain ATCC 19089 / CIP 103742 / CB 15) (Caulobacter crescentus).